We begin with the raw amino-acid sequence, 606 residues long: WD repeat-containing protein 1 (606 aa).

13 WD repeats span residues 4–45 (EIKK…LRNI), 48–87 (PAIADIYTEHAHQVVVAKYAPSGFYIASGDVSGKLRIWDT), 93–135 (LLKY…LWDS), 138–176 (SVGEITGHNKVINSVDIKQSRPYRLVTGSDDNCAAFFEG), 180–218 (KFKFTISDHGRFVNCVRFSPDGNRFATASADGQIFIYDG), 224–263 (VCALGGSKAHDGGIYAISWSPDSTHLLSASGDKTSKIWDV), 270–306 (NTFTMGSNVLDQQLGCLWQKDHLLSISLSGYINYLDK), 311–351 (KPLR…YWDS), 358–408 (SFAG…KLDV), 432–474 (LKDQ…LYSI), 480–518 (KDEGKLLEAKGPVTDLAFSHDGAFLAVCDASKVVTVFSV), 523–561 (SENNVFYGHHAKIVCLAWSPDNEHFASGGMDMMVYVWTL), and 566–604 (TRVKIQDAHRLHHVSSLAWLDEHTLVTTSHDASVKEWTI). N6-acetyllysine is present on residues K28, K81, K95, and K115. The residue at position 238 (Y238) is a Phosphotyrosine. K480 carries the N6-acetyllysine modification.

The protein belongs to the WD repeat AIP1 family.

Its subcellular location is the cytoplasm. It is found in the cytoskeleton. The protein localises to the cell projection. It localises to the podosome. Induces disassembly of actin filaments in conjunction with ADF/cofilin family proteins. Enhances cofilin-mediated actin severing. Involved in cytokinesis. Involved in chemotactic cell migration by restricting lamellipodial membrane protrusions. Involved in myocardium sarcomere organization. Required for cardiomyocyte growth and maintenance. Involved in megakaryocyte maturation and platelet shedding. Required for the establishment of planar cell polarity (PCP) during follicular epithelium development and for cell shape changes during PCP; the function seems to implicate cooperation with CFL1 and/or DSTN/ADF. Involved in the generation/maintenance of cortical tension. Involved in assembly and maintenance of epithelial apical cell junctions and plays a role in the organization of the perijunctional actomyosin belt. This is WD repeat-containing protein 1 (WDR1) from Bos taurus (Bovine).